A 765-amino-acid polypeptide reads, in one-letter code: Probable ATP-dependent RNA helicase DDX27 (765 aa).

Residues 1–48 (MLSELGFIRTIGEDEDVQVEPETDSEDEEEEGPIVLGRKQKALQKNRS) are disordered. Residues 13–32 (EDEDVQVEPETDSEDEEEEG) show a composition bias toward acidic residues. Phosphoserine occurs at positions 25 and 48. The Required for interaction with the PEBOW complex signature appears at 55 to 57 (FVF). The tract at residues 88–148 (EKIEKVRKKR…ESETDYSSAD (61 aa)) is disordered. Over residues 98 to 119 (KTEDKEAKSGKSEKEKEAKEGS) the composition is skewed to basic and acidic residues. Residues S135 and S146 each carry the phosphoserine modification. The Nuclear localization signal signature appears at 164 to 169 (KKKKKK). The short motif at 187–215 (LSFQDMNLSRPLLKAITAMGFKQPTPIQK) is the Q motif element. Residues 218 to 392 (IPVGLLGKDI…SVSLKNPVRI (175 aa)) enclose the Helicase ATP-binding domain. 231–238 (AATGTGKT) is an ATP binding site. The short motif at 340–343 (DEAD) is the DEAD box element. One can recognise a Helicase C-terminal domain in the interval 426-572 (LLMRTFTDHV…DVILKFRDKI (147 aa)). 2 stretches are compositionally biased toward basic residues: residues 685–694 (KRNRRAKRAR) and 744–765 (LGLPHQRRGGNFKSKSRYKRRK). The tract at residues 685-765 (KRNRRAKRAR…KSKSRYKRRK (81 aa)) is disordered.

Belongs to the DEAD box helicase family. DDX27/DRS1 subfamily. In terms of assembly, associates with PeBoW complex, composed of BOP1, PES1 and WDR12. Interacts directly with BOP1 and PES1.

The protein resides in the nucleus. Its subcellular location is the nucleolus. It localises to the chromosome. The catalysed reaction is ATP + H2O = ADP + phosphate + H(+). Probable ATP-dependent RNA helicase. Component of the nucleolar ribosomal RNA (rRNA) processing machinery that regulates 3' end formation of ribosomal 47S rRNA. This chain is Probable ATP-dependent RNA helicase DDX27 (DDX27), found in Bos taurus (Bovine).